We begin with the raw amino-acid sequence, 626 residues long: Chaperone protein HtpG (626 aa).

The a; substrate-binding stretch occupies residues 1–339 (MSQNQETRGF…SNDLPLNVSR (339 aa)). A b region spans residues 340 to 555 (EILQDNKITA…NDQMTTQMAK (216 aa)). A c region spans residues 556-626 (LFAAAGQPVP…FIKRINKLLG (71 aa)).

The protein belongs to the heat shock protein 90 family. In terms of assembly, homodimer.

Its subcellular location is the cytoplasm. Functionally, molecular chaperone. Has ATPase activity. This chain is Chaperone protein HtpG, found in Haemophilus influenzae (strain 86-028NP).